We begin with the raw amino-acid sequence, 524 residues long: GMP synthase [glutamine-hydrolyzing] (524 aa).

One can recognise a Glutamine amidotransferase type-1 domain in the interval Lys5–Thr195. Cys82 acts as the Nucleophile in catalysis. Catalysis depends on residues His169 and Glu171. One can recognise a GMPS ATP-PPase domain in the interval Trp196–Arg389. Ser223–Ser229 lines the ATP pocket.

Homodimer.

It catalyses the reaction XMP + L-glutamine + ATP + H2O = GMP + L-glutamate + AMP + diphosphate + 2 H(+). The protein operates within purine metabolism; GMP biosynthesis; GMP from XMP (L-Gln route): step 1/1. Its function is as follows. Catalyzes the synthesis of GMP from XMP. The chain is GMP synthase [glutamine-hydrolyzing] from Lachnospira eligens (strain ATCC 27750 / DSM 3376 / VPI C15-48 / C15-B4) (Eubacterium eligens).